We begin with the raw amino-acid sequence, 331 residues long: Beta-ketoacyl-[acyl-carrier-protein] synthase III (331 aa).

Catalysis depends on residues C113 and H256. Residues 257–261 are ACP-binding; sequence QANKR. N286 is a catalytic residue.

This sequence belongs to the thiolase-like superfamily. FabH family. As to quaternary structure, homodimer.

It is found in the cytoplasm. It catalyses the reaction malonyl-[ACP] + acetyl-CoA + H(+) = 3-oxobutanoyl-[ACP] + CO2 + CoA. The protein operates within lipid metabolism; fatty acid biosynthesis. Catalyzes the condensation reaction of fatty acid synthesis by the addition to an acyl acceptor of two carbons from malonyl-ACP. Catalyzes the first condensation reaction which initiates fatty acid synthesis and may therefore play a role in governing the total rate of fatty acid production. Possesses both acetoacetyl-ACP synthase and acetyl transacylase activities. Its substrate specificity determines the biosynthesis of branched-chain and/or straight-chain of fatty acids. The polypeptide is Beta-ketoacyl-[acyl-carrier-protein] synthase III (Solibacter usitatus (strain Ellin6076)).